Consider the following 373-residue polypeptide: Transcription factor bHLH87 (373 aa).

The interval 127-227 (SAESENREIT…GGSSNISFQH (101 aa)) is disordered. The span at 188–218 (PQDDSEKGGFKLIYDENQSKSKKPRTEKERG) shows a compositional bias: basic and acidic residues. Positions 275 to 324 (ISTDPQTVAARQRRERISEKIRVLQTLVPGGTKMDTASMLDEAANYLKFL) constitute a bHLH domain.

As to quaternary structure, homodimer. As to expression, flowers.

It is found in the nucleus. This chain is Transcription factor bHLH87 (BHLH87), found in Arabidopsis thaliana (Mouse-ear cress).